The primary structure comprises 524 residues: Tyrosine-protein kinase HCK (524 aa).

Disordered regions lie at residues 1 to 20 and 35 to 71; these read MGGRSSCEDPGCPRGEGRVP and KASKIEPNANQKGPVYVPDPTSPKKLGPNSINSLPPG. Residue glycine 2 is the site of N-myristoyl glycine attachment. The S-palmitoyl cysteine moiety is linked to residue glycine 3. Tyrosine 50 is modified (phosphotyrosine; by autocatalysis). An SH3 domain is found at 76–136; it reads SEDTIVVALY…PSNYVARVNS (61 aa). The region spanning 142-239 is the SH2 domain; it reads WFFKGISRKD…GLCQKLSVPC (98 aa). A Phosphothreonine modification is found at threonine 200. At tyrosine 207 the chain carries Phosphotyrosine. In terms of domain architecture, Protein kinase spans 260–513; the sequence is LQMEKKLGAG…YIQSVLDDFY (254 aa). ATP-binding positions include 266-274 and lysine 288; that span reads LGAGQFGEV. The Proton acceptor role is filled by aspartate 379. Phosphotyrosine; by autocatalysis is present on tyrosine 409. Serine 460 bears the Phosphoserine mark. A Phosphotyrosine modification is found at tyrosine 520.

The protein belongs to the protein kinase superfamily. Tyr protein kinase family. SRC subfamily. Interacts with ADAM15. Interacts with FASLG. Interacts with ARRB1 and ARRB2. Interacts with FCGR1A; the interaction may be indirect. Interacts with IL6ST. Interacts (via SH3 domain) with ELMO1. Interacts (via SH3 domain) with TP73. Interacts with YAP1. Interacts with ABL1 and ITGB1, and thereby recruits ABL1 to activated ITGB1. Interacts (via SH2 domain) with FLT3 (tyrosine phosphorylated). Interacts with CBL. Interacts with VAV1, WAS and RAPGEF1. Interacts (via SH3 domain) with WDCP. Phosphorylated on several tyrosine residues. Autophosphorylated. Becomes rapidly phosphorylated upon activation of the immunoglobulin receptors FCGR1A and FCGR2A. Phosphorylation at Tyr-409 increases kinase activity. Phosphorylation at Tyr-520 inhibits kinase activity. Kinase activity is not required for phosphorylation at Tyr-520, suggesting that this site may be a target of other kinases. Post-translationally, ubiquitinated by CBL, leading to its degradation via the proteasome. In terms of processing, isoform 2 palmitoylation at position 2 requires prior myristoylation. Palmitoylation at position 3 is required for caveolar localization of isoform 2. In terms of tissue distribution, expressed strongly in spleen and at very low levels in thymus.

The protein resides in the cytoplasmic vesicle. The protein localises to the secretory vesicle. It localises to the cytoplasm. Its subcellular location is the cytosol. It is found in the membrane. The protein resides in the caveola. The protein localises to the lysosome. It localises to the cell projection. Its subcellular location is the podosome membrane. It is found in the cell membrane. The protein resides in the cell junction. The protein localises to the focal adhesion. It localises to the cytoskeleton. Its subcellular location is the golgi apparatus. It is found in the nucleus. It catalyses the reaction L-tyrosyl-[protein] + ATP = O-phospho-L-tyrosyl-[protein] + ADP + H(+). With respect to regulation, subject to autoinhibition, mediated by intramolecular interactions involving the SH2 and SH3 domains. Kinase activity is also regulated by phosphorylation at regulatory tyrosine residues. Phosphorylation at Tyr-409 is required for optimal activity. Phosphorylation at Tyr-520 inhibits kinase activity. Non-receptor tyrosine-protein kinase found in hematopoietic cells that transmits signals from cell surface receptors and plays an important role in the regulation of innate immune responses, including neutrophil, monocyte, macrophage and mast cell functions, phagocytosis, cell survival and proliferation, cell adhesion and migration. Acts downstream of receptors that bind the Fc region of immunoglobulins, such as FCGR1A and FCGR2A, but also CSF3R, PLAUR, the receptors for IFNG, IL2, IL6 and IL8, and integrins, such as ITGB1 and ITGB2. During the phagocytic process, mediates mobilization of secretory lysosomes, degranulation, and activation of NADPH oxidase to bring about the respiratory burst. Plays a role in the release of inflammatory molecules. Promotes reorganization of the actin cytoskeleton and actin polymerization, formation of podosomes and cell protrusions. Inhibits TP73-mediated transcription activation and TP73-mediated apoptosis. Phosphorylates CBL in response to activation of immunoglobulin gamma Fc region receptors. Phosphorylates ADAM15, BCR, ELMO1, FCGR2A, GAB1, GAB2, RAPGEF1, STAT5B, TP73, VAV1 and WAS. This Rattus norvegicus (Rat) protein is Tyrosine-protein kinase HCK (Hck).